A 467-amino-acid chain; its full sequence is Serine/threonine-protein kinase AFC1 (467 aa).

Residues 115 to 443 (YQILSKMGEG…AREALNHPFF (329 aa)) enclose the Protein kinase domain. Residues 121–129 (MGEGTFGQV) and Lys-144 each bind ATP. Residue Asp-240 is the Proton acceptor of the active site. The segment at 447 to 467 (REQSIPPFNPNPHPFLYNQKN) is disordered.

It belongs to the protein kinase superfamily. CMGC Ser/Thr protein kinase family. Lammer subfamily.

It carries out the reaction L-seryl-[protein] + ATP = O-phospho-L-seryl-[protein] + ADP + H(+). The enzyme catalyses L-threonyl-[protein] + ATP = O-phospho-L-threonyl-[protein] + ADP + H(+). It catalyses the reaction L-tyrosyl-[protein] + ATP = O-phospho-L-tyrosyl-[protein] + ADP + H(+). Activator of yeast transcription factor, STE12. This chain is Serine/threonine-protein kinase AFC1 (AFC1), found in Arabidopsis thaliana (Mouse-ear cress).